A 719-amino-acid chain; its full sequence is uncharacterized protein (719 aa).

The stretch at Ile-64 to Glu-100 forms a coiled coil. The S1 motif domain maps to Gly-649–Val-718.

This is an uncharacterized protein from Bacillus subtilis (strain 168).